Consider the following 227-residue polypeptide: Endo-1,4-beta-xylanase 11A (227 aa).

Positions 1-36 (MVSASSLLLAASAIAGVFSAPAAAPVSENLNVLQER) are cleaved as a signal peptide. The 191-residue stretch at 37–227 (ALTSSATGTS…SSGSASITVS (191 aa)) folds into the GH11 domain. Positions 112 to 136 (VYGWTTSPLIEYYIVEDFGTYDPSS) are necrosis inducing domain. Glu-122 acts as the Nucleophile in catalysis. Glu-214 serves as the catalytic Proton donor.

This sequence belongs to the glycosyl hydrolase 11 (cellulase G) family.

The protein localises to the secreted. The enzyme catalyses Endohydrolysis of (1-&gt;4)-beta-D-xylosidic linkages in xylans.. It functions in the pathway glycan degradation; xylan degradation. With respect to regulation, significantly inhibited by the wheat xylanase inhibiting protein I (XIP-I) and the proteinaceous endoxylanase Triticum aestivum xylanase inhibitors I (TAXI-I), whereas no inhibition is detected with TAXI-II. In terms of biological role, endo-1,4-beta-xylanase involved in the hydrolysis of xylan, a major structural heterogeneous polysaccharide found in plant biomass representing the second most abundant polysaccharide in the biosphere, after cellulose. Required for plant infection and the appearance of secondary lesions. Is able to induce necrosis on leaves, seedling growth inhibition, induction of a ROS burst, electrolyte leakage, cytoplasm shrinkage, autofluorescence, cell death, and induction of defense genes, and this abilities are independent of the catalytic activity. Only exhibits elicitor activity in certain plants such as tomato, but not in N.benthamiana. The protein is Endo-1,4-beta-xylanase 11A of Botryotinia fuckeliana (strain B05.10) (Noble rot fungus).